A 437-amino-acid polypeptide reads, in one-letter code: Serine--tRNA ligase (437 aa).

240 to 242 serves as a coordination point for L-serine; the sequence is TAE. 271–273 is a binding site for ATP; sequence RAE. Glu-294 contributes to the L-serine binding site. Position 358–361 (358–361) interacts with ATP; it reads EISS. L-serine is bound at residue Ser-394.

Belongs to the class-II aminoacyl-tRNA synthetase family. Type-1 seryl-tRNA synthetase subfamily. Homodimer. The tRNA molecule binds across the dimer.

The protein resides in the cytoplasm. It catalyses the reaction tRNA(Ser) + L-serine + ATP = L-seryl-tRNA(Ser) + AMP + diphosphate + H(+). The enzyme catalyses tRNA(Sec) + L-serine + ATP = L-seryl-tRNA(Sec) + AMP + diphosphate + H(+). Its pathway is aminoacyl-tRNA biosynthesis; selenocysteinyl-tRNA(Sec) biosynthesis; L-seryl-tRNA(Sec) from L-serine and tRNA(Sec): step 1/1. In terms of biological role, catalyzes the attachment of serine to tRNA(Ser). Is also able to aminoacylate tRNA(Sec) with serine, to form the misacylated tRNA L-seryl-tRNA(Sec), which will be further converted into selenocysteinyl-tRNA(Sec). This Methylobacterium nodulans (strain LMG 21967 / CNCM I-2342 / ORS 2060) protein is Serine--tRNA ligase.